A 442-amino-acid chain; its full sequence is Exodeoxyribonuclease 7 large subunit (442 aa).

The disordered stretch occupies residues methionine 1–aspartate 38. A compositionally biased stretch (basic residues) spans alanine 22–serine 33.

Belongs to the XseA family. In terms of assembly, heterooligomer composed of large and small subunits.

It localises to the cytoplasm. The catalysed reaction is Exonucleolytic cleavage in either 5'- to 3'- or 3'- to 5'-direction to yield nucleoside 5'-phosphates.. Bidirectionally degrades single-stranded DNA into large acid-insoluble oligonucleotides, which are then degraded further into small acid-soluble oligonucleotides. The polypeptide is Exodeoxyribonuclease 7 large subunit (Rhodopirellula baltica (strain DSM 10527 / NCIMB 13988 / SH1)).